The primary structure comprises 600 residues: ATP-dependent lipid A-core flippase (600 aa).

The next 4 membrane-spanning stretches (helical) occupy residues 27–47, 83–103, 174–194, and 267–287; these read ISLF…QPML, LLII…NYFL, LLFM…LIAV, and PLLQ…VLYL. Residues 31–322 form the ABC transmembrane type-1 domain; the sequence is LISIVGFLIF…LSEVSSTIQK (292 aa). In terms of domain architecture, ABC transporter spans 354–590; the sequence is LDVRNLSFTY…NGYYARLNAM (237 aa). 388-395 is an ATP binding site; the sequence is GRSGSGKS.

Belongs to the ABC transporter superfamily. Lipid exporter (TC 3.A.1.106) family. Homodimer.

It is found in the cell inner membrane. It catalyses the reaction ATP + H2O + lipid A-core oligosaccharideSide 1 = ADP + phosphate + lipid A-core oligosaccharideSide 2.. Functionally, involved in lipopolysaccharide (LPS) biosynthesis. Translocates lipid A-core from the inner to the outer leaflet of the inner membrane. Transmembrane domains (TMD) form a pore in the inner membrane and the ATP-binding domain (NBD) is responsible for energy generation. The polypeptide is ATP-dependent lipid A-core flippase (Pseudomonas fluorescens (strain Pf0-1)).